Consider the following 230-residue polypeptide: Dephospho-CoA kinase (230 aa).

In terms of domain architecture, DPCK spans 3–225 (IIGLTGGIAT…REGGAICPTP (223 aa)). 11–16 (ATGKST) contributes to the ATP binding site.

The protein belongs to the CoaE family.

The protein localises to the cytoplasm. The catalysed reaction is 3'-dephospho-CoA + ATP = ADP + CoA + H(+). It functions in the pathway cofactor biosynthesis; coenzyme A biosynthesis; CoA from (R)-pantothenate: step 5/5. Its function is as follows. Catalyzes the phosphorylation of the 3'-hydroxyl group of dephosphocoenzyme A to form coenzyme A. The chain is Dephospho-CoA kinase from Synechococcus sp. (strain JA-3-3Ab) (Cyanobacteria bacterium Yellowstone A-Prime).